The chain runs to 252 residues: Mediator of RNA polymerase II transcription subunit 4 (252 aa).

Positions 70–112 (KIHQEMQVLEKEVEKRDSDIQQLQKQLKEAEHILATAVYQAKE) form a coiled coil. The interval 218-252 (HSNEFLMESLGPNKENEEDVEVMSTDSSSSSSDSD) is disordered. Over residues 241–252 (STDSSSSSSDSD) the composition is skewed to low complexity.

The protein belongs to the Mediator complex subunit 4 family. In terms of assembly, component of the Mediator complex.

Its subcellular location is the nucleus. Functionally, component of the Mediator complex, a coactivator involved in the regulated transcription of nearly all RNA polymerase II-dependent genes. Mediator functions as a bridge to convey information from gene-specific regulatory proteins to the basal RNA polymerase II transcription machinery. Mediator is recruited to promoters by direct interactions with regulatory proteins and serves as a scaffold for the assembly of a functional preinitiation complex with RNA polymerase II and the general transcription factors. This Xenopus tropicalis (Western clawed frog) protein is Mediator of RNA polymerase II transcription subunit 4 (med4).